The sequence spans 347 residues: Holliday junction branch migration complex subunit RuvB (347 aa).

A large ATPase domain (RuvB-L) region spans residues 1–186; sequence MKDENSINFL…FGITARFELY (186 aa). Residues L25, R26, G67, K70, T71, T72, 133–135, R176, Y186, and R223 each bind ATP; that span reads EDY. Position 71 (T71) interacts with Mg(2+). The segment at 187–257 is small ATPAse domain (RuvB-S); that stretch reads SEIELVEIIK…IVSIGLEMLR (71 aa). Positions 260 to 347 are head domain (RuvB-H); sequence GEGLDEQDRN…DISENQRVSF (88 aa). Positions 315 and 320 each coordinate DNA.

Belongs to the RuvB family. Homohexamer. Forms an RuvA(8)-RuvB(12)-Holliday junction (HJ) complex. HJ DNA is sandwiched between 2 RuvA tetramers; dsDNA enters through RuvA and exits via RuvB. An RuvB hexamer assembles on each DNA strand where it exits the tetramer. Each RuvB hexamer is contacted by two RuvA subunits (via domain III) on 2 adjacent RuvB subunits; this complex drives branch migration. In the full resolvosome a probable DNA-RuvA(4)-RuvB(12)-RuvC(2) complex forms which resolves the HJ.

It is found in the cytoplasm. The enzyme catalyses ATP + H2O = ADP + phosphate + H(+). In terms of biological role, the RuvA-RuvB-RuvC complex processes Holliday junction (HJ) DNA during genetic recombination and DNA repair, while the RuvA-RuvB complex plays an important role in the rescue of blocked DNA replication forks via replication fork reversal (RFR). RuvA specifically binds to HJ cruciform DNA, conferring on it an open structure. The RuvB hexamer acts as an ATP-dependent pump, pulling dsDNA into and through the RuvAB complex. RuvB forms 2 homohexamers on either side of HJ DNA bound by 1 or 2 RuvA tetramers; 4 subunits per hexamer contact DNA at a time. Coordinated motions by a converter formed by DNA-disengaged RuvB subunits stimulates ATP hydrolysis and nucleotide exchange. Immobilization of the converter enables RuvB to convert the ATP-contained energy into a lever motion, pulling 2 nucleotides of DNA out of the RuvA tetramer per ATP hydrolyzed, thus driving DNA branch migration. The RuvB motors rotate together with the DNA substrate, which together with the progressing nucleotide cycle form the mechanistic basis for DNA recombination by continuous HJ branch migration. Branch migration allows RuvC to scan DNA until it finds its consensus sequence, where it cleaves and resolves cruciform DNA. The polypeptide is Holliday junction branch migration complex subunit RuvB (Borrelia garinii subsp. bavariensis (strain ATCC BAA-2496 / DSM 23469 / PBi) (Borreliella bavariensis)).